A 535-amino-acid chain; its full sequence is NAD(P)H-quinone oxidoreductase chain 4 2 (535 aa).

Transmembrane regions (helical) follow at residues F9–I29, W51–G71, L106–L126, L130–D150, L152–W172, F184–F204, L227–H247, T258–M278, L290–T310, I326–G346, A347–A367, L399–G419, L432–M452, and V479–V499.

Belongs to the complex I subunit 4 family.

The protein resides in the cellular thylakoid membrane. It carries out the reaction a plastoquinone + NADH + (n+1) H(+)(in) = a plastoquinol + NAD(+) + n H(+)(out). It catalyses the reaction a plastoquinone + NADPH + (n+1) H(+)(in) = a plastoquinol + NADP(+) + n H(+)(out). Functionally, NDH-1 shuttles electrons from NAD(P)H, via FMN and iron-sulfur (Fe-S) centers, to quinones in the respiratory chain. The immediate electron acceptor for the enzyme in this species is believed to be plastoquinone. Couples the redox reaction to proton translocation (for every two electrons transferred, four hydrogen ions are translocated across the cytoplasmic membrane), and thus conserves the redox energy in a proton gradient. The polypeptide is NAD(P)H-quinone oxidoreductase chain 4 2 (Synechococcus sp. (strain JA-3-3Ab) (Cyanobacteria bacterium Yellowstone A-Prime)).